Consider the following 433-residue polypeptide: 23S rRNA (uracil(1939)-C(5))-methyltransferase RlmD (433 aa).

In terms of domain architecture, TRAM spans 1 to 53 (MPVAVIESLDHEGRGVAHVDGKVVFVEGALAGEQVEYTVYRQRPSYDLAEATR). 4 residues coordinate [4Fe-4S] cluster: Cys-66, Cys-72, Cys-75, and Cys-154. S-adenosyl-L-methionine is bound by residues Gln-263, Phe-292, Asn-297, Glu-313, Asn-341, and Asp-362. The Nucleophile role is filled by Cys-389.

This sequence belongs to the class I-like SAM-binding methyltransferase superfamily. RNA M5U methyltransferase family. RlmD subfamily.

It catalyses the reaction uridine(1939) in 23S rRNA + S-adenosyl-L-methionine = 5-methyluridine(1939) in 23S rRNA + S-adenosyl-L-homocysteine + H(+). Its function is as follows. Catalyzes the formation of 5-methyl-uridine at position 1939 (m5U1939) in 23S rRNA. In Aromatoleum aromaticum (strain DSM 19018 / LMG 30748 / EbN1) (Azoarcus sp. (strain EbN1)), this protein is 23S rRNA (uracil(1939)-C(5))-methyltransferase RlmD.